The following is a 311-amino-acid chain: Catabolite control protein B (311 aa).

The HTH lacI-type domain maps to 1 to 56; sequence MANIKEIARLANVSVSTVSRVLNHHPYVSEEKRKLVHQVMKELDYTPNRTAIDLIR. Residues 4–23 constitute a DNA-binding region (H-T-H motif); it reads IKEIARLANVSVSTVSRVLN.

In terms of assembly, seems to be complexed to phosphorylated HPr.

Functionally, transcriptional regulator involved in catabolite repression of several operons. This Bacillus subtilis (strain 168) protein is Catabolite control protein B (ccpB).